Reading from the N-terminus, the 303-residue chain is Aquaporin NIP1-2 (303 aa).

The interval 1–39 (MAGREDGAAAGAMEEGQDSKEVKCESSEDGSSSSSSSRC) is disordered. Basic and acidic residues predominate over residues 17–26 (QDSKEVKCES). The next 2 membrane-spanning stretches (helical) occupy residues 66–86 (ILAE…AVVV) and 91–111 (GGAV…MVLV). Residues 123–125 (NPA) carry the NPA 1 motif. 3 helical membrane passes run 145–165 (VVAQ…VFGG), 188–208 (AAAL…GVAT), and 212–232 (AIGE…VLFA). The NPA 2 motif lies at 241–243 (NPA). A helical transmembrane segment spans residues 255–275 (YGGVWVYVAAPVSGTVCGAWA).

It belongs to the MIP/aquaporin (TC 1.A.8) family. NIP (TC 1.A.8.12) subfamily. As to expression, expressed in roots and leaves, and at lower levels in anthers.

It localises to the membrane. Aquaporins facilitate the transport of water and small neutral solutes across cell membranes. In Oryza sativa subsp. japonica (Rice), this protein is Aquaporin NIP1-2 (NIP1-2).